A 68-amino-acid chain; its full sequence is DNA-directed RNA polymerase subunit omega (68 aa).

Belongs to the RNA polymerase subunit omega family. The RNAP catalytic core consists of 2 alpha, 1 beta, 1 beta' and 1 omega subunit. When a sigma factor is associated with the core the holoenzyme is formed, which can initiate transcription.

It catalyses the reaction RNA(n) + a ribonucleoside 5'-triphosphate = RNA(n+1) + diphosphate. Functionally, promotes RNA polymerase assembly. Latches the N- and C-terminal regions of the beta' subunit thereby facilitating its interaction with the beta and alpha subunits. In Neisseria gonorrhoeae (strain NCCP11945), this protein is DNA-directed RNA polymerase subunit omega.